The sequence spans 218 residues: Radial spoke head 1 homolog (218 aa).

The span at 1–13 (MSDAGTEEFDEEQ) shows a compositional bias: acidic residues. The tract at residues 1-48 (MSDAGTEEFDEEQGSLGEYEGDRNEAGERHGQGKAVLPRGDTYQGAYE) is disordered. 6 MORN repeats span residues 19–42 (YEGDRNEAGERHGQGKAVLPRGDT), 43–65 (YQGAYENGKRCGQGTYKFKNGAR), 66–88 (YTGEWYMNLKHGQGVLYYPDGSK), 89–111 (YEGSWVDDQRQGHGVYTYPNGDT), 112–134 (YDGEWLHHQRHGQGTYTHQETGS), and 158–180 (YHGNFVNNNPSGPGKYVFDIGCE). Positions 20–31 (EGDRNEAGERHG) are enriched in basic and acidic residues.

Component of the axonemal radial spoke complexes. Interacts with septin SEPT7. In terms of tissue distribution, testis-specific.

It localises to the cytoplasm. Its subcellular location is the cytoskeleton. The protein resides in the cilium axoneme. The protein localises to the flagellum basal body. It is found in the flagellum axoneme. Functions as part of axonemal radial spoke complexes that play an important part in the motility of sperm and cilia. This chain is Radial spoke head 1 homolog (rsph1), found in Cyprinus carpio (Common carp).